The chain runs to 498 residues: ATP synthase subunit beta, chloroplastic (498 aa).

172–179 (GGAGVGKT) provides a ligand contact to ATP.

This sequence belongs to the ATPase alpha/beta chains family. F-type ATPases have 2 components, CF(1) - the catalytic core - and CF(0) - the membrane proton channel. CF(1) has five subunits: alpha(3), beta(3), gamma(1), delta(1), epsilon(1). CF(0) has four main subunits: a(1), b(1), b'(1) and c(9-12).

The protein localises to the plastid. Its subcellular location is the chloroplast thylakoid membrane. The catalysed reaction is ATP + H2O + 4 H(+)(in) = ADP + phosphate + 5 H(+)(out). Functionally, produces ATP from ADP in the presence of a proton gradient across the membrane. The catalytic sites are hosted primarily by the beta subunits. The protein is ATP synthase subunit beta, chloroplastic of Helianthus annuus (Common sunflower).